We begin with the raw amino-acid sequence, 469 residues long: Soluble pyridine nucleotide transhydrogenase (469 aa).

Residue 39 to 48 (ERENSVGGGC) participates in FAD binding.

Belongs to the class-I pyridine nucleotide-disulfide oxidoreductase family. Requires FAD as cofactor.

It localises to the cytoplasm. It catalyses the reaction NAD(+) + NADPH = NADH + NADP(+). Functionally, conversion of NADPH, generated by peripheral catabolic pathways, to NADH, which can enter the respiratory chain for energy generation. The polypeptide is Soluble pyridine nucleotide transhydrogenase (Photobacterium profundum (strain SS9)).